The sequence spans 393 residues: tRNA(Met) cytidine acetate ligase (393 aa).

ATP is bound by residues Gly81, Asn142, and Arg167.

This sequence belongs to the TmcAL family.

It is found in the cytoplasm. It catalyses the reaction cytidine(34) in elongator tRNA(Met) + acetate + ATP = N(4)-acetylcytidine(34) in elongator tRNA(Met) + AMP + diphosphate. Catalyzes the formation of N(4)-acetylcytidine (ac(4)C) at the wobble position of elongator tRNA(Met), using acetate and ATP as substrates. First activates an acetate ion to form acetyladenylate (Ac-AMP) and then transfers the acetyl group to tRNA to form ac(4)C34. In Bacillus thuringiensis (strain Al Hakam), this protein is tRNA(Met) cytidine acetate ligase.